The sequence spans 365 residues: Ribosomal RNA large subunit methyltransferase M (365 aa).

S-adenosyl-L-methionine contacts are provided by residues serine 188, 221–224 (CPGG), aspartate 240, aspartate 260, and aspartate 277. Lysine 306 serves as the catalytic Proton acceptor.

Belongs to the class I-like SAM-binding methyltransferase superfamily. RNA methyltransferase RlmE family. RlmM subfamily. Monomer.

The protein resides in the cytoplasm. It carries out the reaction cytidine(2498) in 23S rRNA + S-adenosyl-L-methionine = 2'-O-methylcytidine(2498) in 23S rRNA + S-adenosyl-L-homocysteine + H(+). Its function is as follows. Catalyzes the 2'-O-methylation at nucleotide C2498 in 23S rRNA. The chain is Ribosomal RNA large subunit methyltransferase M from Proteus mirabilis (strain HI4320).